Here is a 205-residue protein sequence, read N- to C-terminus: Heme-binding protein 2 (205 aa).

The disordered stretch occupies residues 1-39 (MAEPLQPDPGAAEDAAAQAVETPGWKAPEDAGPQPGSYE). Position 2 is an N-acetylalanine (Ala2). Ser181 carries the phosphoserine modification.

Belongs to the HEBP family. As to quaternary structure, monomer. Interacts with LRPPRC. May interact with BCL2L1; an interaction with BCL2L1 was observed using a peptide, but not with the full-length protein. The full-length protein would have to undergo a major conformation change for the interaction to occur. Interacts with PDCD6. In terms of tissue distribution, detected in placenta.

The protein localises to the cytoplasm. It localises to the mitochondrion. Its function is as follows. Can promote mitochondrial permeability transition and facilitate necrotic cell death under different types of stress conditions. This Homo sapiens (Human) protein is Heme-binding protein 2 (HEBP2).